Consider the following 876-residue polypeptide: Pre-mRNA-splicing factor ATP-dependent RNA helicase-like protein PRP2 (876 aa).

The interval 1–111 (MSSITSETGK…KGLLGDSENE (111 aa)) is disordered. An N-acetylserine modification is found at S2. The segment covering 61–70 (VFSNTNQGPE) has biased composition (polar residues). Residues 233–399 (LQEIKKNQVL…FDNCPIFNVP (167 aa)) enclose the Helicase ATP-binding domain. ATP is bound at residue 246–253 (GETGSGKT). A DEAH box motif is present at residues 346-349 (DEAH). Residues 424–598 (TIFQIHTTQS…NTVLLLLSLG (175 aa)) form the Helicase C-terminal domain.

This sequence belongs to the DEAD box helicase family. DEAH subfamily. Interacts directly with pre-mRNA. According to PubMed:2251118, associated with spliceosomes prior to and throughout step 1 of the splicing reaction. According to PubMed:8943336, it leaves the spliceosome before reaction 1. Interacts with SPP2.

It localises to the nucleus. It catalyses the reaction ATP + H2O = ADP + phosphate + H(+). Involved in pre-mRNA splicing. Is required together with ATP and at least one other factor, for the first cleavage-ligation reaction. Functions as a molecular motor in the activation of the precatalytic spliceosome for the first transesterification reaction of pre-mRNA splicing by hydrolyzing ATP to cause the activation of the spliceosome without the occurrence of splicing. Capable of hydrolyzing nucleoside triphosphates in the presence of single-stranded RNAs such as poly(U). In Saccharomyces cerevisiae (strain ATCC 204508 / S288c) (Baker's yeast), this protein is Pre-mRNA-splicing factor ATP-dependent RNA helicase-like protein PRP2 (PRP2).